Consider the following 414-residue polypeptide: 3-phosphoshikimate 1-carboxyvinyltransferase (414 aa).

The 3-phosphoshikimate site is built by K20, S21, and R25. K20 contributes to the phosphoenolpyruvate binding site. Phosphoenolpyruvate-binding residues include G88 and R116. Residues T157, S158, Q159, S183, D297, and K324 each coordinate 3-phosphoshikimate. Q159 lines the phosphoenolpyruvate pocket. The active-site Proton acceptor is D297. The phosphoenolpyruvate site is built by R328, R369, and K395.

This sequence belongs to the EPSP synthase family. As to quaternary structure, monomer.

It is found in the cytoplasm. It carries out the reaction 3-phosphoshikimate + phosphoenolpyruvate = 5-O-(1-carboxyvinyl)-3-phosphoshikimate + phosphate. It participates in metabolic intermediate biosynthesis; chorismate biosynthesis. Its function is as follows. Catalyzes the transfer of the enolpyruvyl moiety of phosphoenolpyruvate (PEP) to the 5-hydroxyl of shikimate-3-phosphate (S3P) to produce enolpyruvyl shikimate-3-phosphate and inorganic phosphate. The polypeptide is 3-phosphoshikimate 1-carboxyvinyltransferase (Caldivirga maquilingensis (strain ATCC 700844 / DSM 13496 / JCM 10307 / IC-167)).